Here is a 289-residue protein sequence, read N- to C-terminus: 4-hydroxybenzoate octaprenyltransferase (289 aa).

Transmembrane regions (helical) follow at residues 33 to 53, 99 to 119, 141 to 161, 163 to 183, 213 to 233, 238 to 258, and 268 to 288; these read LWALWVAAPGLPPLWILAVFV, LFVVLVVLAFLLVLTLNTMTI, LPQVVLGAAFGWSIPMAFAAV, ESVPLSCWLMFLANILWAVAY, LIIGILQVAVLALMVVIGRLN, EFYWSVLVAGLLFAYQQKLIV, and AFLNNNYVGLVLFLGLAMSYW.

Belongs to the UbiA prenyltransferase family. Requires Mg(2+) as cofactor.

It is found in the cell inner membrane. It catalyses the reaction all-trans-octaprenyl diphosphate + 4-hydroxybenzoate = 4-hydroxy-3-(all-trans-octaprenyl)benzoate + diphosphate. It functions in the pathway cofactor biosynthesis; ubiquinone biosynthesis. In terms of biological role, catalyzes the prenylation of para-hydroxybenzoate (PHB) with an all-trans polyprenyl group. Mediates the second step in the final reaction sequence of ubiquinone-8 (UQ-8) biosynthesis, which is the condensation of the polyisoprenoid side chain with PHB, generating the first membrane-bound Q intermediate 3-octaprenyl-4-hydroxybenzoate. The polypeptide is 4-hydroxybenzoate octaprenyltransferase (Enterobacter sp. (strain 638)).